The sequence spans 726 residues: uncharacterized protein (726 aa).

Active-site charge relay system residues include Ser-583 and His-698.

It belongs to the peptidase S9B family.

This is an uncharacterized protein from Sinorhizobium fredii (strain NBRC 101917 / NGR234).